Reading from the N-terminus, the 245-residue chain is Carboxy-S-adenosyl-L-methionine synthase (245 aa).

Residues tyrosine 42, 67 to 69, 92 to 93, 120 to 121, asparagine 135, and arginine 202 each bind S-adenosyl-L-methionine; these read GCS, DN, and DI.

The protein belongs to the class I-like SAM-binding methyltransferase superfamily. Cx-SAM synthase family. As to quaternary structure, homodimer.

The enzyme catalyses prephenate + S-adenosyl-L-methionine = carboxy-S-adenosyl-L-methionine + 3-phenylpyruvate + H2O. Catalyzes the conversion of S-adenosyl-L-methionine (SAM) to carboxy-S-adenosyl-L-methionine (Cx-SAM). This is Carboxy-S-adenosyl-L-methionine synthase from Vibrio vulnificus (strain CMCP6).